Reading from the N-terminus, the 569-residue chain is Protein AF-9 (569 aa).

The 138-residue stretch at 1–138 (MASSCAVQVK…EDFRRKLLKA (138 aa)) folds into the YEATS domain. Residues 138 to 476 (AGGDPNRSIH…PPPPLLKTNN (339 aa)) are disordered. Positions 149 to 190 (SSSSSSSSSSSSSSSSSSSSSSSSSSSSSSSSSSSSSSSSSS) are enriched in low complexity. Residues 202–265 (EHKEKPSKDS…PKPMSKEPKA (64 aa)) show a composition bias toward basic and acidic residues. Serine 289 and serine 295 each carry phosphoserine. A Nuclear localization signal motif is present at residues 296-301 (AKKRKK). A compositionally biased stretch (low complexity) spans 304-314 (SEALFKSFSSA). A compositionally biased stretch (basic and acidic residues) spans 323 to 350 (ADKKQIKDKSHVKMGKVKIESETSEKKK). A Glycyl lysine isopeptide (Lys-Gly) (interchain with G-Cter in SUMO2) cross-link involves residue lysine 340. A compositionally biased stretch (acidic residues) spans 358–369 (DIVDPNDSDVEE). Low complexity predominate over residues 372–396 (SSKSDSEQPSPASSSSSSSSSFTPS). A phosphoserine mark is found at serine 413 and serine 420. Over residues 415–430 (DNEEESDEAEDNDNDS) the composition is skewed to acidic residues. The span at 446-462 (VSLSDGSDSESSSASSP) shows a compositional bias: low complexity. At serine 484 the chain carries Phosphoserine.

As to quaternary structure, component of the super elongation complex (SEC), at least composed of EAF1, EAF2, CDK9, MLLT3/AF9, AFF (AFF1 or AFF4), the P-TEFb complex and ELL (ELL, ELL2 or ELL3). Interacts with BCOR. Interacts with CBX8. Interacts with ALKBH4. Ubiquitously expressed. Strong expression in the spleen.

It localises to the nucleus. The protein resides in the chromosome. Chromatin reader component of the super elongation complex (SEC), a complex required to increase the catalytic rate of RNA polymerase II transcription by suppressing transient pausing by the polymerase at multiple sites along the DNA. Specifically recognizes and binds acylated histone H3, with a preference for histone H3 that is crotonylated. Crotonylation marks active promoters and enhancers and confers resistance to transcriptional repressors. Recognizes and binds histone H3 crotonylated at 'Lys-9' (H3K9cr), and with slightly lower affinity histone H3 crotonylated at 'Lys-18' (H3K18cr). Also recognizes and binds histone H3 acetylated and butyrylated at 'Lys-9' (H3K9ac and H3K9bu, respectively), but with lower affinity than crotonylated histone H3. In the SEC complex, MLLT3 is required to recruit the complex to crotonylated histones. Recruitment of the SEC complex to crotonylated histones promotes recruitment of DOT1L on active chromatin to deposit histone H3 'Lys-79' methylation (H3K79me). Plays a key role in hematopoietic stem cell (HSC) maintenance by preserving, rather than conferring, HSC stemness. Acts by binding to the transcription start site of active genes in HSCs and sustaining level of H3K79me2, probably by recruiting DOT1L. The sequence is that of Protein AF-9 (Mllt3) from Mus musculus (Mouse).